The following is a 546-amino-acid chain: Probable protein kinase UbiB (546 aa).

In terms of domain architecture, Protein kinase spans Asp124–Phe502. ATP is bound by residues Leu130 to Val138 and Lys153. Asp288 (proton acceptor) is an active-site residue. The next 2 membrane-spanning stretches (helical) occupy residues Tyr501–Pro521 and Glu522–Trp542.

It belongs to the ABC1 family. UbiB subfamily.

The protein resides in the cell inner membrane. It participates in cofactor biosynthesis; ubiquinone biosynthesis [regulation]. Its function is as follows. Is probably a protein kinase regulator of UbiI activity which is involved in aerobic coenzyme Q (ubiquinone) biosynthesis. In Escherichia coli O127:H6 (strain E2348/69 / EPEC), this protein is Probable protein kinase UbiB.